The chain runs to 569 residues: Proline--tRNA ligase (569 aa).

The protein belongs to the class-II aminoacyl-tRNA synthetase family. ProS type 1 subfamily. In terms of assembly, homodimer.

It is found in the cytoplasm. It catalyses the reaction tRNA(Pro) + L-proline + ATP = L-prolyl-tRNA(Pro) + AMP + diphosphate. Functionally, catalyzes the attachment of proline to tRNA(Pro) in a two-step reaction: proline is first activated by ATP to form Pro-AMP and then transferred to the acceptor end of tRNA(Pro). As ProRS can inadvertently accommodate and process non-cognate amino acids such as alanine and cysteine, to avoid such errors it has two additional distinct editing activities against alanine. One activity is designated as 'pretransfer' editing and involves the tRNA(Pro)-independent hydrolysis of activated Ala-AMP. The other activity is designated 'posttransfer' editing and involves deacylation of mischarged Ala-tRNA(Pro). The misacylated Cys-tRNA(Pro) is not edited by ProRS. This Campylobacter jejuni subsp. jejuni serotype O:2 (strain ATCC 700819 / NCTC 11168) protein is Proline--tRNA ligase.